Consider the following 142-residue polypeptide: Galactose-6-phosphate isomerase subunit LacA 2 (142 aa).

It belongs to the LacAB/RpiB family. Heteromultimeric protein consisting of LacA and LacB.

It carries out the reaction aldehydo-D-galactose 6-phosphate = keto-D-tagatose 6-phosphate. It participates in carbohydrate metabolism; D-galactose 6-phosphate degradation; D-tagatose 6-phosphate from D-galactose 6-phosphate: step 1/1. The protein is Galactose-6-phosphate isomerase subunit LacA 2 of Streptococcus pyogenes serotype M3 (strain ATCC BAA-595 / MGAS315).